Consider the following 500-residue polypeptide: Gamma-glutamylanilide synthase (500 aa).

The GS beta-grasp domain occupies 32-136 (LGLEMIRLSW…MLADLHWKSG (105 aa)). One can recognise a GS catalytic domain in the interval 143-500 (PRGIMKKAVK…WEQKEYFNLL (358 aa)).

The protein belongs to the glutamine synthetase family. As to quaternary structure, homohexamer.

It catalyses the reaction aniline + L-glutamate + ATP = N(5)-phenyl-L-glutamine + ADP + phosphate. Involved in the initial oxidation of aniline to catechol by the release of its amino group. Catalyzes the ATP-dependent ligation of L-glutamate to aniline to yield gamma-glutamylanilide (gamma-GA). AtdA1 has a broad substrate range and is able to convert the following anilines, including chlorinated and methylated forms of aniline: aniline (100%), o-chloroaniline (92%), m-chloroaniline (69%), p-chloroaniline (92%), o-methylaniline (40%), m-methylaniline (27%) and p-methylaniline (45%). The protein is Gamma-glutamylanilide synthase of Acinetobacter sp.